The primary structure comprises 166 residues: Mitochondrial inner membrane protease subunit 1 (166 aa).

Catalysis depends on residues serine 40 and lysine 83.

This sequence belongs to the peptidase S26 family. IMP1 subfamily. In terms of assembly, heterodimer of 2 subunits, IMMPL1 and IMMPL2.

It localises to the mitochondrion inner membrane. Functionally, catalyzes the removal of transit peptides required for the targeting of proteins from the mitochondrial matrix, across the inner membrane, into the inter-membrane space. Known to process the nuclear encoded protein DIABLO. In Mus musculus (Mouse), this protein is Mitochondrial inner membrane protease subunit 1 (Immp1l).